The following is an 840-amino-acid chain: Probable inorganic carbon transporter subunit DabA (840 aa).

Residues C355, D357, H539, and C554 each contribute to the Zn(2+) site.

The protein belongs to the inorganic carbon transporter (TC 9.A.2) DabA family. Forms a complex with DabB. Requires Zn(2+) as cofactor.

The protein localises to the cell membrane. Part of an energy-coupled inorganic carbon pump. This Roseiflexus castenholzii (strain DSM 13941 / HLO8) protein is Probable inorganic carbon transporter subunit DabA.